The following is a 511-amino-acid chain: 2,3-bisphosphoglycerate-independent phosphoglycerate mutase (511 aa).

Mn(2+) is bound at residue D12. Y36 is modified (phosphotyrosine). Residue S62 coordinates Mn(2+). S62 acts as the Phosphoserine intermediate in catalysis. Substrate contacts are provided by residues H123, 153-154 (RD), R185, R191, 261-264 (RPDR), and K336. Mn(2+)-binding residues include D403, H407, D444, H445, and H462.

It belongs to the BPG-independent phosphoglycerate mutase family. As to quaternary structure, monomer. It depends on Mn(2+) as a cofactor.

The catalysed reaction is (2R)-2-phosphoglycerate = (2R)-3-phosphoglycerate. Its pathway is carbohydrate degradation; glycolysis; pyruvate from D-glyceraldehyde 3-phosphate: step 3/5. Its function is as follows. Catalyzes the interconversion of 2-phosphoglycerate and 3-phosphoglycerate. The polypeptide is 2,3-bisphosphoglycerate-independent phosphoglycerate mutase (Geobacillus thermodenitrificans (strain NG80-2)).